The chain runs to 123 residues: Ribosome-binding factor A (123 aa).

Belongs to the RbfA family. Monomer. Binds 30S ribosomal subunits, but not 50S ribosomal subunits or 70S ribosomes.

Its subcellular location is the cytoplasm. In terms of biological role, one of several proteins that assist in the late maturation steps of the functional core of the 30S ribosomal subunit. Associates with free 30S ribosomal subunits (but not with 30S subunits that are part of 70S ribosomes or polysomes). Required for efficient processing of 16S rRNA. May interact with the 5'-terminal helix region of 16S rRNA. This is Ribosome-binding factor A from Chlorobium chlorochromatii (strain CaD3).